Consider the following 213-residue polypeptide: Redox-sensing transcriptional repressor Rex (213 aa).

A DNA-binding region (H-T-H motif) is located at residues 17 to 56 (LYYRIFKRFHSENIEKASSKQIAEAIGIDSATVRRDFSYF). Residue 91-96 (GVGNIG) participates in NAD(+) binding.

It belongs to the transcriptional regulatory Rex family. As to quaternary structure, homodimer.

It is found in the cytoplasm. In terms of biological role, modulates transcription in response to changes in cellular NADH/NAD(+) redox state. The sequence is that of Redox-sensing transcriptional repressor Rex from Streptococcus mutans serotype c (strain ATCC 700610 / UA159).